Reading from the N-terminus, the 150-residue chain is 5-hydroxytryptamine receptor 1B (150 aa).

Residues 1–83 (VEARSRILKQ…AARERKATKT (83 aa)) lie on the Extracellular side of the membrane. Polar residues predominate over residues 27 to 40 (DSPGSTSSVTSINS). A disordered region spans residues 27 to 50 (DSPGSTSSVTSINSRAPDLPSESG). A helical membrane pass occupies residues 84-105 (LGIILGAFIVCWLPFFIISLAM). Topologically, residues 106–115 (PICKDACWFH) are cytoplasmic. The chain crosses the membrane as a helical span at residues 116–138 (LAIFDFFTWLGYLNSLINPIIYT). Residues 133-137 (NPIIY) carry the NPxxY motif; important for ligand-induced conformation changes and signaling motif. Residues 139-150 (MFNEDFKQAFHK) are Extracellular-facing.

The protein belongs to the G-protein coupled receptor 1 family. In terms of assembly, homodimer. Heterodimer with HTR1D. In terms of processing, phosphorylated. Desensitization of the receptor may be mediated by its phosphorylation. Palmitoylated.

The protein localises to the cell membrane. Its function is as follows. G-protein coupled receptor for 5-hydroxytryptamine (serotonin). Also functions as a receptor for ergot alkaloid derivatives, various anxiolytic and antidepressant drugs and other psychoactive substances, such as lysergic acid diethylamide (LSD). Ligand binding causes a conformation change that triggers signaling via guanine nucleotide-binding proteins (G proteins) and modulates the activity of downstream effectors, such as adenylate cyclase. HTR1B is coupled to G(i)/G(o) G alpha proteins and mediates inhibitory neurotransmission by inhibiting adenylate cyclase activity. Arrestin family members inhibit signaling via G proteins and mediate activation of alternative signaling pathways. Regulates the release of 5-hydroxytryptamine, dopamine and acetylcholine in the brain, and thereby affects neural activity, nociceptive processing, pain perception, mood and behavior. Besides, plays a role in vasoconstriction of cerebral arteries. The polypeptide is 5-hydroxytryptamine receptor 1B (HTR1B) (Sus scrofa (Pig)).